Here is a 156-residue protein sequence, read N- to C-terminus: Small ribosomal subunit protein uS7 (156 aa).

The protein belongs to the universal ribosomal protein uS7 family. Part of the 30S ribosomal subunit. Contacts proteins S9 and S11.

Its function is as follows. One of the primary rRNA binding proteins, it binds directly to 16S rRNA where it nucleates assembly of the head domain of the 30S subunit. Is located at the subunit interface close to the decoding center, probably blocks exit of the E-site tRNA. The sequence is that of Small ribosomal subunit protein uS7 from Acetivibrio thermocellus (strain ATCC 27405 / DSM 1237 / JCM 9322 / NBRC 103400 / NCIMB 10682 / NRRL B-4536 / VPI 7372) (Clostridium thermocellum).